The sequence spans 398 residues: uncharacterized protein (398 aa).

A disordered region spans residues 313 to 398 (KTIKSSGSKT…TSKSIKYYEV (86 aa)). Low complexity-rich tracts occupy residues 314-333 (TIKSSGSKTSKSIGSKTNKS) and 343-398 (GSKT…YYEV).

This is an uncharacterized protein from Acanthamoeba polyphaga mimivirus (APMV).